The following is a 477-amino-acid chain: (R)-2-hydroxyglutaryl-CoA dehydratase, subunit alpha (477 aa).

It belongs to the FldB/FldC dehydratase alpha/beta subunit family. As to quaternary structure, the (R)-2-hydroxyglutaryl-CoA dehydratase enzyme system is a heterodimer composed of an alpha subunit (HgdA) and a beta subunit (HgdB). The cofactor is [4Fe-4S] cluster. FMN is required as a cofactor. Requires Mg(2+) as cofactor.

The protein resides in the cytoplasm. It carries out the reaction (R)-2-hydroxyglutaryl-CoA = (2E)-glutaconyl-CoA + H2O. The protein operates within amino-acid degradation; L-glutamate degradation via hydroxyglutarate pathway; crotonoyl-CoA from L-glutamate: step 4/5. Its activity is regulated as follows. Activated by the HgdC. Reversibly inactivated by oxidants such as 2-nitrophenol, 3-nitrophenol, 4-nitrophenol, 4-nitrobenzoate, carbonyl cyanide 4-(trifluoromethoxy)phenylhydrazone (FCCP) and chloramphenicol. Irreversibly inactivated by oxidants such as hydroxylamine and nitrite. Its function is as follows. Involved in the fermentation of L-glutamate via the hydroxyglutarate pathway. Catalyzes the reversible syn-elimination of water from (R)-2-hydroxyglutaryl-CoA to yield (E)-glutaconyl-CoA. The dehydration mechanism involves a transient one electron reduction of the thioester from (R)-2-hydroxyglutaryl-CoA, generating a ketyl radical. Prior to (E)-glutaconyl-CoA formation, the ketyl radical is subsequently reoxidized by electron transfer back to the HgdA-HgdB complex (CompD) to avoid change in oxidation state of the substrate. The appropriate redox state of dehydratase HgdA-HgdB complex (CompD) is maintained by HgdC (CompA) via hydrolysis of ATP and ATP-dependent electron transfer. Since the electron is recycled, the dehydratase is able to perform several turnovers with only catalytic amounts of ATP and substoichiometric amounts of HgdC (CompA). The polypeptide is (R)-2-hydroxyglutaryl-CoA dehydratase, subunit alpha (Acidaminococcus fermentans (strain ATCC 25085 / DSM 20731 / CCUG 9996 / CIP 106432 / VR4)).